Reading from the N-terminus, the 89-residue chain is Small ribosomal subunit protein uS14 (89 aa).

It belongs to the universal ribosomal protein uS14 family. In terms of assembly, part of the 30S ribosomal subunit. Contacts proteins S3 and S10.

In terms of biological role, binds 16S rRNA, required for the assembly of 30S particles and may also be responsible for determining the conformation of the 16S rRNA at the A site. The polypeptide is Small ribosomal subunit protein uS14 (Chlorobaculum tepidum (strain ATCC 49652 / DSM 12025 / NBRC 103806 / TLS) (Chlorobium tepidum)).